We begin with the raw amino-acid sequence, 193 residues long: Ion-translocating oxidoreductase complex subunit A (193 aa).

6 helical membrane passes run 5-25, 39-59, 63-83, 102-122, 134-154, and 171-191; these read LLLLVSTVLINNFVLVKFLGL, VGMGLATTFVMTLASASSYLM, ILIPLNIAYLRTLAFILVIAV, LLGIFLPLITTNCAVLGVALL, IIYGFGAAAGFSLVLILFAAM, and SIAMVTAGLMSLAFMGFTGLI.

Belongs to the NqrDE/RnfAE family. In terms of assembly, the complex is composed of six subunits: RnfA, RnfB, RnfC, RnfD, RnfE and RnfG.

It localises to the cell inner membrane. Its function is as follows. Part of a membrane-bound complex that couples electron transfer with translocation of ions across the membrane. The protein is Ion-translocating oxidoreductase complex subunit A of Aeromonas salmonicida (strain A449).